A 381-amino-acid polypeptide reads, in one-letter code: CD2 homolog (381 aa).

The first 16 residues, 1 to 16, serve as a signal peptide directing secretion; it reads MIIKLIFLICFKIVLS. At 17–208 the chain is on the extracellular side; the sequence is INYWVRYNDT…QNYFLENIHT (192 aa). 12 N-linked (GlcNAc...) asparagine; by host glycosylation sites follow: Asn24, Asn73, Asn77, Asn85, Asn91, Asn104, Asn121, Asn133, Asn144, Asn176, Asn183, and Asn189. Cystine bridges form between Cys122/Cys190 and Cys129/Cys173. A helical transmembrane segment spans residues 209 to 229; the sequence is LFYMIIFIVSGITISIFISII. Over 230–381 the chain is Cytoplasmic; the sequence is TFLSLRKRKK…ISLIHVDRII (152 aa). Residues 243–278 are disordered; sequence EIESPPPESNEEEQCQHDDTTSIHEPSPREPLLPKP. The segment covering 256-270 has biased composition (basic and acidic residues); it reads QCQHDDTTSIHEPSP. 7 tandem repeats follow at residues 305–310, 311–316, 317–322, 323–328, 329–334, 335–340, and 341–346. The 7 X 6 AA tandem repeats of K-[LP]-C-[PRS]-[PS]-[PS] stretch occupies residues 305–334; sequence KPCPPPKPCPPPKPCPPPKPCPPPKPCPPP. Residues 341-362 are disordered; it reads KPCPPPESYSPPKPLPSIPLLP.

Belongs to the asfivirus CD2 homolog protein family. Both glycosylated and nonglycosylated forms interact (via C-terminus) with the host AP-1 complex. Post-translationally, cleaved into two fragments of 63 kDa and 26 kDa containing respectively the glycosylated N-terminus and the nonglycosylated C-terminus. A full-length 89-kDa glycosylated form also exists.

The protein resides in the host membrane. It localises to the virion membrane. It is found in the host Golgi apparatus. In terms of biological role, may play an immunosuppressive role by inhibiting lymphocyte proliferation and subsequently facilitating viral replication and generalization of infection. Responsible for viral hemadsorption, which may help viral spread. Increases virus replication in the tick vector at the step of virus uptake or replication in the tick gut. May play a role in the host Golgi reorganization to yield viral factories. May play a role in host cell penetration. The chain is CD2 homolog from African swine fever virus (isolate Warthog/Namibia/Wart80/1980) (ASFV).